We begin with the raw amino-acid sequence, 102 residues long: Putative pterin-4-alpha-carbinolamine dehydratase (102 aa).

This sequence belongs to the pterin-4-alpha-carbinolamine dehydratase family.

The enzyme catalyses (4aS,6R)-4a-hydroxy-L-erythro-5,6,7,8-tetrahydrobiopterin = (6R)-L-erythro-6,7-dihydrobiopterin + H2O. The polypeptide is Putative pterin-4-alpha-carbinolamine dehydratase (Burkholderia orbicola (strain MC0-3)).